A 168-amino-acid polypeptide reads, in one-letter code: Skp-like protein (168 aa).

Positions 1 to 22 are cleaved as a signal peptide; sequence MRKFTQFVLITAAIMAAPSAFA.

This sequence belongs to the Skp family.

The polypeptide is Skp-like protein (Pseudomonas aeruginosa (strain ATCC 15692 / DSM 22644 / CIP 104116 / JCM 14847 / LMG 12228 / 1C / PRS 101 / PAO1)).